The sequence spans 522 residues: MQLAKPLKYAAISGIVAFVGLMFGWVIFPAILKSQLKKEMALSKKTDVRKMWEKIPFALDFKIYLFNYTNAEDVQKGAVPIVKEVGPFYFEEWKEKVEVEENEGNDTINYKKIDVFLFKPELSGPGLTGEEVIVMPNIFMMAMALTVYREKPAMLNVAAKAINGIFDSPSDVFMRVKALDILFRGIIINCDRTEFAPKAACTTIKKEAPNGIVFEPNNQLRFSLFGVRNNSVDPHVVTVKRGVQNVMDVGRVVAIDGKTKMNVWRDSCNEYQGTDGTVFPPFLTHKDRLQSFSGDLCRSFKPWFQKKTSYNGIKTNRYVANIGDFANDPELQCYCDSPDKCPPKGLMDLYKCIKAPMFVSMPHYLEGDPELLKNVKGLNPNAKEHGIEIDFEPISGTPMVAKQRIQFNIQLLKSEKMDLLKDLPGTIVPLFWIEEGLSLNKTFVKMLKSQLFIPKRVVSVVCWCMISFGSLGVIAAVIFHFKGDIMHLAVAGDNSVSKIKPENDENKEVGVMGQNQEPAKVM.

At 1–11 the chain is on the cytoplasmic side; it reads MQLAKPLKYAA. The chain crosses the membrane as a helical span at residues 12–32; it reads ISGIVAFVGLMFGWVIFPAIL. Residues 33-458 lie on the Extracellular side of the membrane; it reads KSQLKKEMAL…SQLFIPKRVV (426 aa). N-linked (GlcNAc...) asparagine glycans are attached at residues Asn67, Asn105, and Asn229. 3 disulfide bridges follow: Cys268-Cys333, Cys297-Cys352, and Cys335-Cys341. A glycan (N-linked (GlcNAc...) asparagine) is linked at Asn440. Residues 459–479 traverse the membrane as a helical segment; sequence SVVCWCMISFGSLGVIAAVIF. At 480–522 the chain is on the cytoplasmic side; the sequence is HFKGDIMHLAVAGDNSVSKIKPENDENKEVGVMGQNQEPAKVM. The interval 500-522 is disordered; that stretch reads KPENDENKEVGVMGQNQEPAKVM. A compositionally biased stretch (polar residues) spans 513–522; sequence GQNQEPAKVM.

This sequence belongs to the CD36 family. In terms of tissue distribution, principal component of the olfactory cilia membrane. Detected in both male and female antennae but not present in leg, abdomen, thorax or head.

The protein localises to the cell membrane. Its function is as follows. Plays an olfactory role that is not restricted to pheromone sensitivity. The sequence is that of Sensory neuron membrane protein 1 from Bombyx mori (Silk moth).